The chain runs to 95 residues: Trypomastigote decay-accelerating factor (95 aa).

It belongs to the receptors of complement activation (RCA) family.

In terms of biological role, interferes with the efficient assembly of the host C3 convertase. Could protect parasites from complement-mediated lysis by sera from a number of different species. The protein is Trypomastigote decay-accelerating factor of Trypanosoma cruzi.